The following is an 874-amino-acid chain: Alanine--tRNA ligase (874 aa).

His564, His568, Cys666, and His670 together coordinate Zn(2+).

Belongs to the class-II aminoacyl-tRNA synthetase family. Zn(2+) serves as cofactor.

The protein localises to the cytoplasm. The enzyme catalyses tRNA(Ala) + L-alanine + ATP = L-alanyl-tRNA(Ala) + AMP + diphosphate. Its function is as follows. Catalyzes the attachment of alanine to tRNA(Ala) in a two-step reaction: alanine is first activated by ATP to form Ala-AMP and then transferred to the acceptor end of tRNA(Ala). Also edits incorrectly charged Ser-tRNA(Ala) and Gly-tRNA(Ala) via its editing domain. In Carboxydothermus hydrogenoformans (strain ATCC BAA-161 / DSM 6008 / Z-2901), this protein is Alanine--tRNA ligase.